A 417-amino-acid chain; its full sequence is Serine hydroxymethyltransferase (417 aa).

Residues leucine 121 and 125–127 (GHL) each bind (6S)-5,6,7,8-tetrahydrofolate. Lysine 230 bears the N6-(pyridoxal phosphate)lysine mark. Residue 355 to 357 (SPF) coordinates (6S)-5,6,7,8-tetrahydrofolate.

Belongs to the SHMT family. As to quaternary structure, homodimer. The cofactor is pyridoxal 5'-phosphate.

The protein localises to the cytoplasm. It carries out the reaction (6R)-5,10-methylene-5,6,7,8-tetrahydrofolate + glycine + H2O = (6S)-5,6,7,8-tetrahydrofolate + L-serine. The protein operates within one-carbon metabolism; tetrahydrofolate interconversion. It participates in amino-acid biosynthesis; glycine biosynthesis; glycine from L-serine: step 1/1. Functionally, catalyzes the reversible interconversion of serine and glycine with tetrahydrofolate (THF) serving as the one-carbon carrier. This reaction serves as the major source of one-carbon groups required for the biosynthesis of purines, thymidylate, methionine, and other important biomolecules. Also exhibits THF-independent aldolase activity toward beta-hydroxyamino acids, producing glycine and aldehydes, via a retro-aldol mechanism. The polypeptide is Serine hydroxymethyltransferase (Legionella pneumophila subsp. pneumophila (strain Philadelphia 1 / ATCC 33152 / DSM 7513)).